Reading from the N-terminus, the 190-residue chain is Xanthine phosphoribosyltransferase (190 aa).

Positions 20 and 27 each coordinate xanthine. 128-132 (ANGKA) serves as a coordination point for 5-phospho-alpha-D-ribose 1-diphosphate. Lys-156 lines the xanthine pocket.

The protein belongs to the purine/pyrimidine phosphoribosyltransferase family. Xpt subfamily. As to quaternary structure, homodimer.

It localises to the cytoplasm. It catalyses the reaction XMP + diphosphate = xanthine + 5-phospho-alpha-D-ribose 1-diphosphate. It participates in purine metabolism; XMP biosynthesis via salvage pathway; XMP from xanthine: step 1/1. Functionally, converts the preformed base xanthine, a product of nucleic acid breakdown, to xanthosine 5'-monophosphate (XMP), so it can be reused for RNA or DNA synthesis. This is Xanthine phosphoribosyltransferase from Pseudomonas fluorescens (strain Pf0-1).